The sequence spans 235 residues: Orotidine 5'-phosphate decarboxylase (235 aa).

Substrate-binding positions include Asp-12, Lys-34, 61–70 (DMKLLDIDNT), Thr-116, Arg-177, Gln-186, Gly-206, and Arg-207. Catalysis depends on Lys-63, which acts as the Proton donor.

This sequence belongs to the OMP decarboxylase family. Type 1 subfamily. As to quaternary structure, homodimer.

It carries out the reaction orotidine 5'-phosphate + H(+) = UMP + CO2. Its pathway is pyrimidine metabolism; UMP biosynthesis via de novo pathway; UMP from orotate: step 2/2. Catalyzes the decarboxylation of orotidine 5'-monophosphate (OMP) to uridine 5'-monophosphate (UMP). This chain is Orotidine 5'-phosphate decarboxylase, found in Rhizobium etli (strain ATCC 51251 / DSM 11541 / JCM 21823 / NBRC 15573 / CFN 42).